Here is a 140-residue protein sequence, read N- to C-terminus: Large ribosomal subunit protein uL22 (140 aa).

It belongs to the universal ribosomal protein uL22 family. Part of the 50S ribosomal subunit.

Functionally, this protein binds specifically to 23S rRNA; its binding is stimulated by other ribosomal proteins, e.g. L4, L17, and L20. It is important during the early stages of 50S assembly. It makes multiple contacts with different domains of the 23S rRNA in the assembled 50S subunit and ribosome. Its function is as follows. The globular domain of the protein is located near the polypeptide exit tunnel on the outside of the subunit, while an extended beta-hairpin is found that lines the wall of the exit tunnel in the center of the 70S ribosome. This Parafrankia sp. (strain EAN1pec) protein is Large ribosomal subunit protein uL22.